The following is a 223-amino-acid chain: Endonuclease V (223 aa).

Residues Asp-45 and Asp-113 each coordinate Mg(2+).

Belongs to the endonuclease V family. The cofactor is Mg(2+).

It localises to the cytoplasm. The catalysed reaction is Endonucleolytic cleavage at apurinic or apyrimidinic sites to products with a 5'-phosphate.. Its function is as follows. DNA repair enzyme involved in the repair of deaminated bases. Selectively cleaves double-stranded DNA at the second phosphodiester bond 3' to a deoxyinosine leaving behind the intact lesion on the nicked DNA. The polypeptide is Endonuclease V (Dehalococcoides mccartyi (strain ATCC BAA-2100 / JCM 16839 / KCTC 5957 / BAV1)).